We begin with the raw amino-acid sequence, 281 residues long: Aminoglycoside N(3)-acetyltransferase IX (281 aa).

It belongs to the antibiotic N-acetyltransferase family.

It catalyses the reaction a 2-deoxystreptamine antibiotic + acetyl-CoA = an N(3)-acetyl-2-deoxystreptamine antibiotic + CoA + H(+). Resistance to neomycin. The sequence is that of Aminoglycoside N(3)-acetyltransferase IX (aacC9) from Micromonospora chalcea.